The sequence spans 404 residues: Rhomboid-related protein 3 (404 aa).

2 consecutive EF-hand domains span residues 34-69 (APED…HSSK) and 70-105 (LDPH…KRSN). The next 7 helical transmembrane spans lie at 164 to 184 (WFMI…GVSL), 218 to 238 (IFMH…LLVG), 250 to 270 (IGLV…VADM), 274 to 294 (VVGS…NIVM), 303 to 325 (FKLL…AVWL), 338 to 358 (PSFV…VVVL), and 371 to 391 (WWIF…WNIF). Ser278 functions as the Nucleophile in the catalytic mechanism. The active site involves His343.

The protein belongs to the peptidase S54 family.

It localises to the membrane. The enzyme catalyses Cleaves type-1 transmembrane domains using a catalytic dyad composed of serine and histidine that are contributed by different transmembrane domains.. Functionally, may be involved in regulated intramembrane proteolysis and the subsequent release of functional polypeptides from their membrane anchors. The sequence is that of Rhomboid-related protein 3 (RHBDL3) from Homo sapiens (Human).